The sequence spans 284 residues: Cell division protein FtsQ (284 aa).

The Cytoplasmic portion of the chain corresponds to 1-31 (MAQLPASMRRKRAAITSIHDKPPTRKQKLAN). A helical membrane pass occupies residues 32 to 52 (AGGWVLLVIAFVVLAVGIYGL). The Periplasmic segment spans residues 53–284 (YKVITDATVA…SIAGGTKAKP (232 aa)). The region spanning 59–128 (ATVAKLEVVG…NGIRVRVMPR (70 aa)) is the POTRA domain.

It belongs to the FtsQ/DivIB family. FtsQ subfamily. In terms of assembly, part of a complex composed of FtsB, FtsL and FtsQ.

The protein resides in the cell inner membrane. Essential cell division protein. May link together the upstream cell division proteins, which are predominantly cytoplasmic, with the downstream cell division proteins, which are predominantly periplasmic. May control correct divisome assembly. In Acinetobacter oleivorans (strain JCM 16667 / KCTC 23045 / DR1), this protein is Cell division protein FtsQ.